A 172-amino-acid polypeptide reads, in one-letter code: NADH dehydrogenase [ubiquinone] 1 alpha subcomplex subunit 8 (172 aa).

2 consecutive CHCH domains span residues 33-74 (GAQC…FRQI) and 75-118 (KRHC…LGWV). 4 short sequence motifs (cx9C motif) span residues 36–46 (CDKPNKEFMLC), 56–66 (CLEEGKLVNKC), 78–88 (CAEPFTEYWTC), and 100–110 (CRKQQAKFDEC). Intrachain disulfides connect C36-C66, C46-C56, C78-C110, and C88-C100. The interval 133 to 164 (TDRPLPENPYHSRPRPDPSPEIEGDLQPATHG) is disordered.

The protein belongs to the complex I NDUFA8 subunit family. As to quaternary structure, complex I is composed of 45 different subunits. May contain intrachain disulfide bonds, as evidenced by its electrophoretic mobility under reducing vs non-reducing conditions.

The protein resides in the mitochondrion inner membrane. It is found in the mitochondrion intermembrane space. Its subcellular location is the mitochondrion. Accessory subunit of the mitochondrial membrane respiratory chain NADH dehydrogenase (Complex I), that is believed not to be involved in catalysis. Complex I functions in the transfer of electrons from NADH to the respiratory chain. The immediate electron acceptor for the enzyme is believed to be ubiquinone. This is NADH dehydrogenase [ubiquinone] 1 alpha subcomplex subunit 8 (NDUFA8) from Homo sapiens (Human).